A 633-amino-acid polypeptide reads, in one-letter code: Glutathione S-transferase C-terminal domain-containing protein (633 aa).

One can recognise a GST C-terminal domain in the interval 130–332 (LGFKKTCLKA…QEVPGVKTAA (203 aa)). The segment at 191-233 (NDDKLRRQKLKQQKADGVGPPLTKGKAKSKVHTQETSEGLDSS) is disordered. Polar residues predominate over residues 224 to 233 (QETSEGLDSS). Ser-233 carries the phosphoserine modification.

This sequence belongs to the GSTCD family. In terms of tissue distribution, widely expressed in cell types relevant to airway function, including airway smooth muscle cells and epithelial cells.

The protein localises to the cytoplasm. The protein is Glutathione S-transferase C-terminal domain-containing protein (GSTCD) of Homo sapiens (Human).